The chain runs to 297 residues: Glycerol-3-phosphate dehydrogenase [NAD(P)+] (297 aa).

3 residues coordinate NADPH: Trp-11, Arg-33, and Lys-79. 3 residues coordinate sn-glycerol 3-phosphate: Lys-79, Gly-107, and Ser-109. Position 111 (Ala-111) interacts with NADPH. The sn-glycerol 3-phosphate site is built by Lys-161, Asp-214, Ser-224, Arg-225, and Asn-226. Lys-161 serves as the catalytic Proton acceptor. Arg-225 is a binding site for NADPH. NADPH contacts are provided by Val-249 and Glu-251.

Belongs to the NAD-dependent glycerol-3-phosphate dehydrogenase family.

Its subcellular location is the cytoplasm. It catalyses the reaction sn-glycerol 3-phosphate + NAD(+) = dihydroxyacetone phosphate + NADH + H(+). It carries out the reaction sn-glycerol 3-phosphate + NADP(+) = dihydroxyacetone phosphate + NADPH + H(+). The protein operates within membrane lipid metabolism; glycerophospholipid metabolism. Its function is as follows. Catalyzes the reduction of the glycolytic intermediate dihydroxyacetone phosphate (DHAP) to sn-glycerol 3-phosphate (G3P), the key precursor for phospholipid synthesis. The protein is Glycerol-3-phosphate dehydrogenase [NAD(P)+] of Campylobacter jejuni subsp. jejuni serotype O:23/36 (strain 81-176).